The following is a 349-amino-acid chain: Pseudouridylate synthase TRUB1 (349 aa).

At Ala2 the chain carries N-acetylalanine. The residue at position 11 (Ser11) is a Phosphoserine. The active-site Nucleophile is Asp121.

Belongs to the pseudouridine synthase TruB family. As to expression, highly expressed in heart, skeletal muscle and liver. Expressed at lower levels in lung, small intestine, kidney and spleen.

The protein localises to the nucleus. The protein resides in the cytoplasm. Its subcellular location is the cytosol. The enzyme catalyses a uridine in mRNA = a pseudouridine in mRNA. It catalyses the reaction a uridine in tRNA = a pseudouridine in tRNA. The catalysed reaction is uridine(55) in tRNA = pseudouridine(55) in tRNA. In terms of biological role, pseudouridine synthase that catalyzes pseudouridylation of mRNAs and tRNAs. Mediates pseudouridylation of mRNAs with the consensus sequence 5'-GUUCNANNC-3', harboring a stem-loop structure. Constitutes the major pseudouridine synthase acting on mRNAs. Also catalyzes pseudouridylation of some tRNAs, including synthesis of pseudouridine(55) from uracil-55, in the psi GC loop of a subset of tRNAs. Promotes the processing of pri-let-7 microRNAs (pri-miRNAs) independently of its RNA pseudouridylate synthase activity. Acts by binding to the stem-loop structure on pri-let-7, preventing LIN28-binding (LIN28A and/or LIN28B), thereby enhancing the interaction between pri-let-7 and the microprocessor DGCR8, which mediates miRNA maturation. This chain is Pseudouridylate synthase TRUB1, found in Homo sapiens (Human).